We begin with the raw amino-acid sequence, 553 residues long: Dihydroxy-acid dehydratase (553 aa).

Residue Asp78 coordinates Mg(2+). Cys119 contacts [2Fe-2S] cluster. The Mg(2+) site is built by Asp120 and Lys121. Residue Lys121 is modified to N6-carboxylysine. Cys193 provides a ligand contact to [2Fe-2S] cluster. Glu441 provides a ligand contact to Mg(2+). Catalysis depends on Ser467, which acts as the Proton acceptor.

The protein belongs to the IlvD/Edd family. In terms of assembly, homodimer. [2Fe-2S] cluster serves as cofactor. It depends on Mg(2+) as a cofactor.

It carries out the reaction (2R)-2,3-dihydroxy-3-methylbutanoate = 3-methyl-2-oxobutanoate + H2O. It catalyses the reaction (2R,3R)-2,3-dihydroxy-3-methylpentanoate = (S)-3-methyl-2-oxopentanoate + H2O. It participates in amino-acid biosynthesis; L-isoleucine biosynthesis; L-isoleucine from 2-oxobutanoate: step 3/4. It functions in the pathway amino-acid biosynthesis; L-valine biosynthesis; L-valine from pyruvate: step 3/4. Functions in the biosynthesis of branched-chain amino acids. Catalyzes the dehydration of (2R,3R)-2,3-dihydroxy-3-methylpentanoate (2,3-dihydroxy-3-methylvalerate) into 2-oxo-3-methylpentanoate (2-oxo-3-methylvalerate) and of (2R)-2,3-dihydroxy-3-methylbutanoate (2,3-dihydroxyisovalerate) into 2-oxo-3-methylbutanoate (2-oxoisovalerate), the penultimate precursor to L-isoleucine and L-valine, respectively. The protein is Dihydroxy-acid dehydratase of Geobacter metallireducens (strain ATCC 53774 / DSM 7210 / GS-15).